The chain runs to 238 residues: Ribonuclease PH (238 aa).

A disordered region spans residues 64 to 86 (GMLPRSTGSRMDREAARGKQSGR). Residues Arg86 and 124–126 (GTR) each bind phosphate.

It belongs to the RNase PH family. As to quaternary structure, homohexameric ring arranged as a trimer of dimers.

It carries out the reaction tRNA(n+1) + phosphate = tRNA(n) + a ribonucleoside 5'-diphosphate. Its function is as follows. Phosphorolytic 3'-5' exoribonuclease that plays an important role in tRNA 3'-end maturation. Removes nucleotide residues following the 3'-CCA terminus of tRNAs; can also add nucleotides to the ends of RNA molecules by using nucleoside diphosphates as substrates, but this may not be physiologically important. Probably plays a role in initiation of 16S rRNA degradation (leading to ribosome degradation) during starvation. This is Ribonuclease PH from Methylobacillus flagellatus (strain ATCC 51484 / DSM 6875 / VKM B-1610 / KT).